The sequence spans 91 residues: Small ribosomal subunit protein uS19 (91 aa).

This sequence belongs to the universal ribosomal protein uS19 family.

Functionally, protein S19 forms a complex with S13 that binds strongly to the 16S ribosomal RNA. This Janthinobacterium sp. (strain Marseille) (Minibacterium massiliensis) protein is Small ribosomal subunit protein uS19.